Reading from the N-terminus, the 177-residue chain is Nucleoside triphosphate/diphosphate phosphatase (177 aa).

The active-site Proton donor is arginine 23. Mg(2+)-binding residues include asparagine 87, aspartate 103, aspartate 105, aspartate 107, aspartate 120, and glutamate 123.

Belongs to the Ntdp family. Mg(2+) serves as cofactor.

It carries out the reaction a ribonucleoside 5'-triphosphate + H2O = a ribonucleoside 5'-diphosphate + phosphate + H(+). The catalysed reaction is a ribonucleoside 5'-diphosphate + H2O = a ribonucleoside 5'-phosphate + phosphate + H(+). Has nucleoside phosphatase activity towards nucleoside triphosphates and nucleoside diphosphates. This is Nucleoside triphosphate/diphosphate phosphatase from Streptococcus pneumoniae serotype 2 (strain D39 / NCTC 7466).